A 655-amino-acid polypeptide reads, in one-letter code: Putative esterase (655 aa).

The chain crosses the membrane as a helical span at residues 9–29; it reads VLSLTLIYISISIGFSVYFYV. N-linked (GlcNAc...) asparagine; by host glycosylation is found at N71, N89, N101, N185, N386, N449, and N512. Catalysis depends on H515, which acts as the Charge relay system. N-linked (GlcNAc...) asparagine; by host glycosylation is found at N527 and N597.

The protein belongs to the type-B carboxylesterase/lipase family.

The protein resides in the membrane. It carries out the reaction a carboxylic ester + H2O = an alcohol + a carboxylate + H(+). The sequence is that of Putative esterase from Noctuidae (owlet moths).